A 239-amino-acid chain; its full sequence is Peptidyl-tRNA hydrolase (239 aa).

Y14 contributes to the tRNA binding site. H19 functions as the Proton acceptor in the catalytic mechanism. Residues F64, N66, and N112 each coordinate tRNA. A disordered region spans residues 186 to 239 (RTAPPRPSTGTGRPPAKTPARAEEPPAPAASPAPATAPLPDARSPLQKLVDRFK). Residues 193-204 (STGTGRPPAKTP) are compositionally biased toward low complexity. Pro residues predominate over residues 210–222 (PPAPAASPAPATA).

It belongs to the PTH family. Monomer.

The protein resides in the cytoplasm. The catalysed reaction is an N-acyl-L-alpha-aminoacyl-tRNA + H2O = an N-acyl-L-amino acid + a tRNA + H(+). Its function is as follows. Hydrolyzes ribosome-free peptidyl-tRNAs (with 1 or more amino acids incorporated), which drop off the ribosome during protein synthesis, or as a result of ribosome stalling. In terms of biological role, catalyzes the release of premature peptidyl moieties from peptidyl-tRNA molecules trapped in stalled 50S ribosomal subunits, and thus maintains levels of free tRNAs and 50S ribosomes. The polypeptide is Peptidyl-tRNA hydrolase (Ruegeria pomeroyi (strain ATCC 700808 / DSM 15171 / DSS-3) (Silicibacter pomeroyi)).